The primary structure comprises 524 residues: Maturase K (524 aa).

The protein belongs to the intron maturase 2 family. MatK subfamily.

Its subcellular location is the plastid. The protein localises to the chloroplast. Its function is as follows. Usually encoded in the trnK tRNA gene intron. Probably assists in splicing its own and other chloroplast group II introns. The sequence is that of Maturase K from Welwitschia mirabilis (Tree tumbo).